A 114-amino-acid polypeptide reads, in one-letter code: Probable 4-amino-4-deoxy-L-arabinose-phosphoundecaprenol flippase subunit ArnE (114 aa).

3 helical membrane-spanning segments follow: residues 41-61, 64-84, and 91-111; these read MWLW…LLVL, MDVG…TLVG, and PVDP…FQLG.

This sequence belongs to the ArnE family. As to quaternary structure, heterodimer of ArnE and ArnF.

It is found in the cell inner membrane. The protein operates within bacterial outer membrane biogenesis; lipopolysaccharide biosynthesis. Translocates 4-amino-4-deoxy-L-arabinose-phosphoundecaprenol (alpha-L-Ara4N-phosphoundecaprenol) from the cytoplasmic to the periplasmic side of the inner membrane. This Pseudomonas savastanoi pv. phaseolicola (strain 1448A / Race 6) (Pseudomonas syringae pv. phaseolicola (strain 1448A / Race 6)) protein is Probable 4-amino-4-deoxy-L-arabinose-phosphoundecaprenol flippase subunit ArnE.